The primary structure comprises 460 residues: UDP-N-acetylmuramoylalanine--D-glutamate ligase (460 aa).

Residue 123-129 participates in ATP binding; sequence GTNGKTT.

The protein belongs to the MurCDEF family.

The protein localises to the cytoplasm. The catalysed reaction is UDP-N-acetyl-alpha-D-muramoyl-L-alanine + D-glutamate + ATP = UDP-N-acetyl-alpha-D-muramoyl-L-alanyl-D-glutamate + ADP + phosphate + H(+). The protein operates within cell wall biogenesis; peptidoglycan biosynthesis. Functionally, cell wall formation. Catalyzes the addition of glutamate to the nucleotide precursor UDP-N-acetylmuramoyl-L-alanine (UMA). The chain is UDP-N-acetylmuramoylalanine--D-glutamate ligase (murD) from Enterococcus hirae.